Consider the following 311-residue polypeptide: Porphobilinogen deaminase (311 aa).

Position 241 is an S-(dipyrrolylmethanemethyl)cysteine (C241).

The protein belongs to the HMBS family. As to quaternary structure, monomer. It depends on dipyrromethane as a cofactor.

The enzyme catalyses 4 porphobilinogen + H2O = hydroxymethylbilane + 4 NH4(+). It functions in the pathway porphyrin-containing compound metabolism; protoporphyrin-IX biosynthesis; coproporphyrinogen-III from 5-aminolevulinate: step 2/4. Tetrapolymerization of the monopyrrole PBG into the hydroxymethylbilane pre-uroporphyrinogen in several discrete steps. The chain is Porphobilinogen deaminase from Carboxydothermus hydrogenoformans (strain ATCC BAA-161 / DSM 6008 / Z-2901).